The chain runs to 373 residues: Opsin Rh1 (373 aa).

The Extracellular portion of the chain corresponds to Met1–Trp49. Residue Asn20 is glycosylated (N-linked (GlcNAc...) asparagine). The helical transmembrane segment at Ala50 to Ile74 threads the bilayer. The Cytoplasmic segment spans residues Phe75 to Asn86. The helical transmembrane segment at Leu87–Tyr112 threads the bilayer. Over Phe113–Tyr126 the chain is Extracellular. A disulfide bridge connects residues Cys123 and Cys200. The helical transmembrane segment at Ala127–Leu146 threads the bilayer. Residues Asp147–Leu165 lie on the Cytoplasmic side of the membrane. The helical transmembrane segment at Ala166–Ser189 threads the bilayer. Topologically, residues Arg190 to Ser213 are extracellular. A glycan (N-linked (GlcNAc...) asparagine) is linked at Asn196. A helical transmembrane segment spans residues Tyr214–Val241. Residues Ser242–Lys276 are Cytoplasmic-facing. The chain crosses the membrane as a helical span at residues Val277–Leu300. The Extracellular portion of the chain corresponds to Phe301–Thr307. Residues Pro308 to Ser332 form a helical membrane-spanning segment. Lys319 is subject to N6-(retinylidene)lysine. The Cytoplasmic portion of the chain corresponds to His333–Ala373. Residues Asp354–Ala373 are disordered. Residues Ser358–Ala373 are compositionally biased toward low complexity.

This sequence belongs to the G-protein coupled receptor 1 family. Opsin subfamily. Phosphorylated on some or all of the serine and threonine residues present in the C-terminal region.

Its subcellular location is the cell projection. The protein localises to the rhabdomere membrane. Its function is as follows. Visual pigments are the light-absorbing molecules that mediate vision. They consist of an apoprotein, opsin, covalently linked to cis-retinal. This is Opsin Rh1 (ninaE) from Drosophila melanogaster (Fruit fly).